The sequence spans 237 residues: Exosome complex component Rrp4 (237 aa).

The 73-residue stretch at 72–144 folds into the S1 motif domain; sequence GHIVVGKVVD…LSKDPVLTIK (73 aa). The KH domain occupies 152-211; the sequence is PRGTLVEIPPQKVPRVIGRRGSMVSMIEDLLGVKLIVGQNGRIVVVGDDPQRVEIAVLAV.

The protein belongs to the RRP4 family. Component of the archaeal exosome complex. Forms a trimer of Rrp4 and/or Csl4 subunits. The trimer associates with a hexameric ring-like arrangement composed of 3 Rrp41-Rrp42 heterodimers.

The protein resides in the cytoplasm. Functionally, non-catalytic component of the exosome, which is a complex involved in RNA degradation. Increases the RNA binding and the efficiency of RNA degradation. Confers strong poly(A) specificity to the exosome. This chain is Exosome complex component Rrp4, found in Thermofilum pendens (strain DSM 2475 / Hrk 5).